We begin with the raw amino-acid sequence, 463 residues long: MSLTLWQQCLARLQDELPATEFSMWIRPLQAELNDNTLALYAPNRFVLDWVRDKYLNNINALLNEFCGANVPLLRFEVGSKPVAQAISQPVMVSAHASAPGVVSRPAPTRPSWDNVPALAELSYRSNVNTKHNFDNFVEGKSNQLARAAARQVADNPGGAYNPLFLYGGTGLGKTHLLHAVGNGIMARKPNAKVVYMHSERFVQDMVKALQNNAIEEFKRYYRSVDALLIDDIQFFANKERSQEEFFHTFNALLEGNQQIILTSDRYPKEINGVEDRLKSRFGWGLTVAIEPPELETRVAILMKKADENDIRLPGEVAFFIAKRLRSNVRELEGALNRVIANANFTGRAITIDFVREALRDLLALQEKLVTIDNIQKTVAEYYKIKVADLLSKRRSRSVARPRQMAMAMAKELTNHSLPEIGDAFGGRDHTTVLHACRKIEQLREESHDIKEDFSNLIRTLSS.

A domain I, interacts with DnaA modulators region spans residues 1–83 (MSLTLWQQCL…LRFEVGSKPV (83 aa)). Residues 83–126 (VAQAISQPVMVSAHASAPGVVSRPAPTRPSWDNVPALAELSYRS) form a domain II region. Residues 127 to 343 (NVNTKHNFDN…GALNRVIANA (217 aa)) are domain III, AAA+ region. Positions 171, 173, 174, and 175 each coordinate ATP. Residues 344–463 (NFTGRAITID…FSNLIRTLSS (120 aa)) are domain IV, binds dsDNA.

This sequence belongs to the DnaA family. In terms of assembly, oligomerizes as a right-handed, spiral filament on DNA at oriC.

Its subcellular location is the cytoplasm. Functionally, plays an essential role in the initiation and regulation of chromosomal replication. ATP-DnaA binds to the origin of replication (oriC) to initiate formation of the DNA replication initiation complex once per cell cycle. Binds the DnaA box (a 9 base pair repeat at the origin) and separates the double-stranded (ds)DNA. Forms a right-handed helical filament on oriC DNA; dsDNA binds to the exterior of the filament while single-stranded (ss)DNA is stabiized in the filament's interior. The ATP-DnaA-oriC complex binds and stabilizes one strand of the AT-rich DNA unwinding element (DUE), permitting loading of DNA polymerase. After initiation quickly degrades to an ADP-DnaA complex that is not apt for DNA replication. Binds acidic phospholipids. The chain is Chromosomal replication initiator protein DnaA from Erwinia tasmaniensis (strain DSM 17950 / CFBP 7177 / CIP 109463 / NCPPB 4357 / Et1/99).